A 200-amino-acid chain; its full sequence is MTDNDGQKDFSEAAAENAGSKPGEPRVSKPYIMPDDPEETPSEALVKEAAEAKDRMLRTLAEMENLRKRTQREVADARAYGIAGFARDVLEIADNLQRALDAVPAEARAAADPGLTALIEGVELTERSLHRALEKNGVKKLDAAGEKFDPNIHQAMFEVPDNSVPPGTVVQVIQTGYMIGDRVLRPALVGVSKAEPKPAA.

The segment covering 1-11 (MTDNDGQKDFS) has biased composition (basic and acidic residues). Positions 1–43 (MTDNDGQKDFSEAAAENAGSKPGEPRVSKPYIMPDDPEETPSE) are disordered.

This sequence belongs to the GrpE family. In terms of assembly, homodimer.

It is found in the cytoplasm. In terms of biological role, participates actively in the response to hyperosmotic and heat shock by preventing the aggregation of stress-denatured proteins, in association with DnaK and GrpE. It is the nucleotide exchange factor for DnaK and may function as a thermosensor. Unfolded proteins bind initially to DnaJ; upon interaction with the DnaJ-bound protein, DnaK hydrolyzes its bound ATP, resulting in the formation of a stable complex. GrpE releases ADP from DnaK; ATP binding to DnaK triggers the release of the substrate protein, thus completing the reaction cycle. Several rounds of ATP-dependent interactions between DnaJ, DnaK and GrpE are required for fully efficient folding. This chain is Protein GrpE, found in Afipia carboxidovorans (strain ATCC 49405 / DSM 1227 / KCTC 32145 / OM5) (Oligotropha carboxidovorans).